The sequence spans 485 residues: D-alanine--D-alanyl carrier protein ligase (485 aa).

Position 144-145 (144-145 (TS)) interacts with ATP. Asp189 provides a ligand contact to D-alanine. 284–289 (NTYGPT) contributes to the ATP binding site. Position 293 (Val293) interacts with D-alanine. Residues Asp365 and Lys473 each coordinate ATP. Residue Lys473 coordinates D-alanine.

Belongs to the ATP-dependent AMP-binding enzyme family. DltA subfamily.

The protein localises to the cytoplasm. It carries out the reaction holo-[D-alanyl-carrier protein] + D-alanine + ATP = D-alanyl-[D-alanyl-carrier protein] + AMP + diphosphate. It functions in the pathway cell wall biogenesis; lipoteichoic acid biosynthesis. In terms of biological role, catalyzes the first step in the D-alanylation of lipoteichoic acid (LTA), the activation of D-alanine and its transfer onto the D-alanyl carrier protein (Dcp) DltC. In an ATP-dependent two-step reaction, forms a high energy D-alanyl-AMP intermediate, followed by transfer of the D-alanyl residue as a thiol ester to the phosphopantheinyl prosthetic group of the Dcp. D-alanylation of LTA plays an important role in modulating the properties of the cell wall in Gram-positive bacteria, influencing the net charge of the cell wall. This is D-alanine--D-alanyl carrier protein ligase from Staphylococcus aureus (strain Mu3 / ATCC 700698).